We begin with the raw amino-acid sequence, 421 residues long: Phosphoribosylamine--glycine ligase (421 aa).

Positions 108 to 314 constitute an ATP-grasp domain; it reads KEIMVKYNVP…FAQNIDDIMM (207 aa). 134-195 lines the ATP pocket; it reads IEEQGAPIVV…EEFLDGEEFS (62 aa). Positions 284 and 286 each coordinate Mg(2+).

The protein belongs to the GARS family. The cofactor is Mg(2+). Requires Mn(2+) as cofactor.

The catalysed reaction is 5-phospho-beta-D-ribosylamine + glycine + ATP = N(1)-(5-phospho-beta-D-ribosyl)glycinamide + ADP + phosphate + H(+). It participates in purine metabolism; IMP biosynthesis via de novo pathway; N(1)-(5-phospho-D-ribosyl)glycinamide from 5-phospho-alpha-D-ribose 1-diphosphate: step 2/2. The polypeptide is Phosphoribosylamine--glycine ligase (Streptococcus pyogenes serotype M18 (strain MGAS8232)).